We begin with the raw amino-acid sequence, 600 residues long: NADH-quinone oxidoreductase subunit C/D (600 aa).

The interval 1–190 (MVNNMTDLTA…SPFELTKAKQ (190 aa)) is NADH dehydrogenase I subunit C. Positions 214–600 (DFMFLNLGPN…IDFVMSDVDR (387 aa)) are NADH dehydrogenase I subunit D.

It in the N-terminal section; belongs to the complex I 30 kDa subunit family. In the C-terminal section; belongs to the complex I 49 kDa subunit family. NDH-1 is composed of 13 different subunits. Subunits NuoB, CD, E, F, and G constitute the peripheral sector of the complex.

Its subcellular location is the cell inner membrane. The enzyme catalyses a quinone + NADH + 5 H(+)(in) = a quinol + NAD(+) + 4 H(+)(out). In terms of biological role, NDH-1 shuttles electrons from NADH, via FMN and iron-sulfur (Fe-S) centers, to quinones in the respiratory chain. The immediate electron acceptor for the enzyme in this species is believed to be ubiquinone. Couples the redox reaction to proton translocation (for every two electrons transferred, four hydrogen ions are translocated across the cytoplasmic membrane), and thus conserves the redox energy in a proton gradient. This Escherichia coli (strain ATCC 8739 / DSM 1576 / NBRC 3972 / NCIMB 8545 / WDCM 00012 / Crooks) protein is NADH-quinone oxidoreductase subunit C/D.